The primary structure comprises 64 residues: Temporin-ALh (64 aa).

A signal peptide spans 1–22; the sequence is MFPLKKSLLLLFFLATINLSLC. Residues 23–46 constitute a propeptide that is removed on maturation; sequence EQERNAEEERRDEPDERNAEVEKR. Serine 62 is modified (serine amide).

The protein belongs to the frog skin active peptide (FSAP) family. Temporin subfamily. In terms of tissue distribution, expressed by the skin glands.

The protein resides in the secreted. Antimicrobial peptide with activity against Gram-positive and Gram-negative bacteria and against fungi. Has been tested against S.aureus (MIC=2.5 ug/mL), B.pumilus (MIC=7.5 ug/mL), B.cereus (MIC=75.0 ug/mL), E.coli (MIC=5.0 ug/mL), B.dysenteriae (MIC=20.0 ug/mL), A.cacoaceticus (MIC=60.0 ug/mL), P.aeruginosa (MIC=2.5 ug/mL) and C.albicans (MIC=2.5 ug/mL). Also shows a weak hemolytic activity. In Amolops loloensis (Lolokou Sucker Frog), this protein is Temporin-ALh.